The sequence spans 420 residues: ATP phosphoribosyltransferase regulatory subunit (420 aa).

The protein belongs to the class-II aminoacyl-tRNA synthetase family. HisZ subfamily. As to quaternary structure, heteromultimer composed of HisG and HisZ subunits.

The protein resides in the cytoplasm. The protein operates within amino-acid biosynthesis; L-histidine biosynthesis; L-histidine from 5-phospho-alpha-D-ribose 1-diphosphate: step 1/9. Functionally, required for the first step of histidine biosynthesis. May allow the feedback regulation of ATP phosphoribosyltransferase activity by histidine. The protein is ATP phosphoribosyltransferase regulatory subunit of Bacillus thuringiensis subsp. konkukian (strain 97-27).